Reading from the N-terminus, the 329-residue chain is Ig gamma-2C chain C region (329 aa).

The CH1 stretch occupies residues 1–97 (ARTTAPSVYP…ATKSNLIKRI (97 aa)). Cys-27 and Cys-82 are oxidised to a cystine. The tract at residues 98–113 (EPRRPKPRPPTDICSC) is hinge. The interval 114 to 222 (DDNLGRPSVF…PIEKTISKPR (109 aa)) is CH2. Cystine bridges form between Cys-143-Cys-203 and Cys-249-Cys-307. Positions 223–329 (GKARTPQVYT…QKNLSRSPGK (107 aa)) are CH3.

The chain is Ig gamma-2C chain C region from Rattus norvegicus (Rat).